Here is a 223-residue protein sequence, read N- to C-terminus: Deoxyribose-phosphate aldolase (223 aa).

D91 acts as the Proton donor/acceptor in catalysis. Catalysis depends on K153, which acts as the Schiff-base intermediate with acetaldehyde. The Proton donor/acceptor role is filled by K183.

It belongs to the DeoC/FbaB aldolase family. DeoC type 1 subfamily.

It is found in the cytoplasm. It carries out the reaction 2-deoxy-D-ribose 5-phosphate = D-glyceraldehyde 3-phosphate + acetaldehyde. It participates in carbohydrate degradation; 2-deoxy-D-ribose 1-phosphate degradation; D-glyceraldehyde 3-phosphate and acetaldehyde from 2-deoxy-alpha-D-ribose 1-phosphate: step 2/2. In terms of biological role, catalyzes a reversible aldol reaction between acetaldehyde and D-glyceraldehyde 3-phosphate to generate 2-deoxy-D-ribose 5-phosphate. This is Deoxyribose-phosphate aldolase from Mycoplasmopsis synoviae (strain 53) (Mycoplasma synoviae).